The chain runs to 496 residues: Solute carrier family 2, facilitated glucose transporter member 3 (496 aa).

The Cytoplasmic segment spans residues 1–10; sequence MGTQKVTPAL. The chain crosses the membrane as a helical span at residues 11–32; sequence IFAITVATIGSFQFGYNTGVIN. Over 33 to 64 the chain is Extracellular; that stretch reads APEKIIKEFINKTLTDKGNAPPSEVLLTSLWS. A glycan (N-linked (GlcNAc...) asparagine) is linked at Asn-43. Residues 65–85 form a helical membrane-spanning segment; that stretch reads LSVAIFSVGGMIGSFSVGLFV. The Cytoplasmic segment spans residues 86 to 90; that stretch reads NRFGR. Residues 91 to 111 form a helical membrane-spanning segment; that stretch reads RNSMLIVNLLAVTGGCFMGLC. The Extracellular segment spans residues 112–118; it reads KVAKSVE. Residues 119-142 traverse the membrane as a helical segment; sequence MLILGRLIIGLFCGLCTGFVPMYI. Over 143 to 153 the chain is Cytoplasmic; sequence GEISPTALRGA. Residues 154–174 form a helical membrane-spanning segment; the sequence is FGTLNQLGIVVGILVAQIFGL. Gln-159 contacts D-glucose. Over 175–183 the chain is Extracellular; the sequence is EFILGSEEL. Residues 184–204 form a helical membrane-spanning segment; the sequence is WPLLLGFTILPTILQSAALPF. The Cytoplasmic segment spans residues 205–269; it reads CPESPRFLLI…LFRVSSYRQP (65 aa). Thr-232 carries the post-translational modification Phosphothreonine. A helical transmembrane segment spans residues 270–290; sequence IIISIVLQLSQQLSGINAVFY. The segment at 277–279 is important for selectivity against fructose; the sequence is QLS. Residues 280–281 and Asn-286 each bind D-glucose; that span reads QQ. The Extracellular portion of the chain corresponds to 291 to 304; that stretch reads YSTGIFKDAGVQEP. The helical transmembrane segment at 305–325 threads the bilayer; sequence IYATIGAGVVNTIFTVVSLFL. Asn-315 contacts D-glucose. Over 326–331 the chain is Cytoplasmic; it reads VERAGR. Residues 332–352 traverse the membrane as a helical segment; it reads RTLHMIGLGGMAFCSTLMTVS. The Extracellular portion of the chain corresponds to 353–363; the sequence is LLLKDNYNGMS. A helical membrane pass occupies residues 364 to 389; that stretch reads FVCIGAILVFVAFFEIGPGPIPWFIV. D-glucose is bound by residues Glu-378 and Trp-386. Residues 390–399 are Cytoplasmic-facing; that stretch reads AELFSQGPRP. The chain crosses the membrane as a helical span at residues 400–420; sequence AAMAVAGCSNWTSNFLVGLLF. The Extracellular portion of the chain corresponds to 421-429; it reads PSAAHYLGA. The chain crosses the membrane as a helical span at residues 430–450; sequence YVFIIFTGFLITFLAFTFFKV. Over 451-496 the chain is Cytoplasmic; sequence PETRGRTFEDITRAFEGQAHGADRSGKDGVMEVNSIEPAKETTTNV. Phosphoserine occurs at positions 475 and 485. Position 492 is a phosphothreonine (Thr-492).

This sequence belongs to the major facilitator superfamily. Sugar transporter (TC 2.A.1.1) family. Glucose transporter subfamily. As to quaternary structure, interacts with SMIM43; the interaction may promote SLC2A3-mediated glucose transport to meet the energy needs of mesendoderm differentiation.

Its subcellular location is the cell membrane. The protein resides in the perikaryon. It is found in the cell projection. The enzyme catalyses D-glucose(out) = D-glucose(in). It catalyses the reaction D-galactose(in) = D-galactose(out). With respect to regulation, deoxyglucose transport is inhibited by D-glucose, D-galactose and maltose. Galactose transport is inhibited by D-glucose and maltose. Functionally, facilitative glucose transporter. Can also mediate the uptake of various other monosaccharides across the cell membrane. Mediates the uptake of glucose, 2-deoxyglucose, galactose, mannose, xylose and fucose, and probably also dehydroascorbate. Does not mediate fructose transport. Required for mesendoderm differentiation. This chain is Solute carrier family 2, facilitated glucose transporter member 3, found in Pongo abelii (Sumatran orangutan).